A 78-amino-acid chain; its full sequence is Defensin-like protein 141 (78 aa).

The signal sequence occupies residues 1 to 24 (MTKSIISAFFIILILGMMVNEIEG). 4 disulfides stabilise this stretch: Cys-31/Cys-76, Cys-40/Cys-59, Cys-45/Cys-70, and Cys-49/Cys-72.

Belongs to the DEFL family.

The protein resides in the secreted. The polypeptide is Defensin-like protein 141 (LCR3) (Arabidopsis thaliana (Mouse-ear cress)).